Here is a 140-residue protein sequence, read N- to C-terminus: Putative septation protein SpoVG (140 aa).

Residues 88 to 127 (VAPQAGGLQGAEEPTAVEPAPQLQDESELPWEPGDDGEGA) are disordered. Positions 112-124 (DESELPWEPGDDG) are enriched in acidic residues.

The protein belongs to the SpoVG family.

In terms of biological role, could be involved in septation. The chain is Putative septation protein SpoVG from Symbiobacterium thermophilum (strain DSM 24528 / JCM 14929 / IAM 14863 / T).